The sequence spans 1072 residues: Teashirt homolog 3 (1072 aa).

Disordered stretches follow at residues 44–71 (ACPS…SETS), 130–153 (PSSE…CGSG), and 228–247 (HYRD…WSKP). Over residues 57–71 (SSHEMDSESHISETS) the composition is skewed to basic and acidic residues. 2 consecutive C2H2-type zinc fingers follow at residues 204-228 (FRCK…ETGH) and 265-289 (LKCM…KTKH). Positions 228-237 (HYRDDNHETD) are enriched in basic and acidic residues. The tract at residues 315–336 (SLELELPSSPDSTGGTPKATLS) is disordered. Residues 376–400 (LKCMECGSSHDTLQELTAHMMVTGH) form a C2H2-type 3; atypical zinc finger. Residues 469-481 (AVLDEKPKEKEKA) show a composition bias toward basic and acidic residues. Disordered regions lie at residues 469 to 489 (AVLD…EKYD), 569 to 594 (NSEI…PMPK), 616 to 690 (EKMK…PLSG), 784 to 815 (TKGK…TVTT), and 846 to 888 (TESH…RQSN). 2 stretches are compositionally biased toward polar residues: residues 571 to 593 (EIVS…SPMP) and 649 to 660 (SSGSGFKSQENS). Ser672 carries the post-translational modification Phosphoserine. Composition is skewed to low complexity over residues 791-815 (GCSL…TVTT) and 847-860 (ESHT…SSIS). The homeobox; atypical DNA-binding region spans 882-952 (RKGRQSNWNP…NVKYQLRRTG (71 aa)). C2H2-type zinc fingers lie at residues 967 to 989 (FFCN…LESH) and 1032 to 1055 (YQCK…SKTH).

The protein belongs to the teashirt C2H2-type zinc-finger protein family. As to quaternary structure, interacts (via N-terminus) with HDAC1 and HDAC2; the interaction is direct. Found in a trimeric complex with APBB1 and HDAC1; the interaction between HDAC1 and APBB1 is mediated by TSHZ3. Interacts (via homeobox domain) with APBB1 (via PID domain 1). In terms of tissue distribution, expressed in cortical neurons.

It is found in the nucleus. The protein resides in the cell projection. The protein localises to the growth cone. Its function is as follows. Transcriptional regulator involved in developmental processes. Functions in association with APBB1, SET and HDAC factors as a transcriptional repressor, that inhibits the expression of CASP4. TSHZ3-mediated transcription repression involves the recruitment of histone deacetylases HDAC1 and HDAC2. Associates with chromatin in a region surrounding the CASP4 transcriptional start site(s). Regulates the development of neurons involved in both respiratory rhythm and airflow control. Promotes maintenance of nucleus ambiguus (nA) motoneurons, which govern upper airway function, and establishes a respiratory rhythm generator (RRG) activity compatible with survival at birth. Involved in the differentiation of the proximal uretic smooth muscle cells during developmental processes. Involved in the up-regulation of myocardin, that directs the expression of smooth muscle cells in the proximal ureter. Involved in the modulation of glutamatergic synaptic transmission and long-term synaptic potentiation. In Rattus norvegicus (Rat), this protein is Teashirt homolog 3 (Tshz3).